Consider the following 320-residue polypeptide: Cytochrome f (320 aa).

The N-terminal stretch at Met1 to Ala35 is a signal peptide. Residues Tyr36, Cys56, Cys59, and His60 each coordinate heme. The helical transmembrane segment at Val286–Lys306 threads the bilayer.

This sequence belongs to the cytochrome f family. As to quaternary structure, the 4 large subunits of the cytochrome b6-f complex are cytochrome b6, subunit IV (17 kDa polypeptide, petD), cytochrome f and the Rieske protein, while the 4 small subunits are PetG, PetL, PetM and PetN. The complex functions as a dimer. Heme serves as cofactor.

Its subcellular location is the plastid. The protein resides in the chloroplast thylakoid membrane. Its function is as follows. Component of the cytochrome b6-f complex, which mediates electron transfer between photosystem II (PSII) and photosystem I (PSI), cyclic electron flow around PSI, and state transitions. The sequence is that of Cytochrome f from Lactuca sativa (Garden lettuce).